Here is a 196-residue protein sequence, read N- to C-terminus: Kunitz trypsin inhibitor 5 (196 aa).

A signal peptide spans 1 to 19; the sequence is MSSLLYIFLLLAVFISHRG. Cys-156 and Cys-167 are disulfide-bonded.

Belongs to the protease inhibitor I3 (leguminous Kunitz-type inhibitor) family.

The protein resides in the endoplasmic reticulum. In terms of biological role, can inhibit both serine proteases and cysteine proteases. May be involved in the modulation of the proteases that participate in the hydrolysis of dietary proteins in the gut of spider mites. The polypeptide is Kunitz trypsin inhibitor 5 (Arabidopsis thaliana (Mouse-ear cress)).